Here is a 488-residue protein sequence, read N- to C-terminus: Phenylalanine--tRNA ligase alpha subunit (488 aa).

Residues threonine 315, 354–356 (QLD), phenylalanine 394, and phenylalanine 419 each bind L-phenylalanine.

The protein belongs to the class-II aminoacyl-tRNA synthetase family. Phe-tRNA synthetase alpha subunit type 2 subfamily. As to quaternary structure, tetramer of two alpha and two beta subunits. The cofactor is Mg(2+).

The protein resides in the cytoplasm. The enzyme catalyses tRNA(Phe) + L-phenylalanine + ATP = L-phenylalanyl-tRNA(Phe) + AMP + diphosphate + H(+). This is Phenylalanine--tRNA ligase alpha subunit from Pyrobaculum arsenaticum (strain DSM 13514 / JCM 11321 / PZ6).